Reading from the N-terminus, the 177-residue chain is Putative adenylate kinase (177 aa).

Residues G10, G12, K13, T14, and T15 each contribute to the ATP site. Residues 30 to 50 (NLRDYALEKGIGEMKENELEI) are NMP. The LID stretch occupies residues 99–109 (ERGYGREKLGE). Residues R100 and K138 each coordinate ATP.

It belongs to the adenylate kinase family. AK6 subfamily. As to quaternary structure, interacts with uS11. Not a structural component of 40S pre-ribosomes, but transiently interacts with them by binding to uS11.

It catalyses the reaction AMP + ATP = 2 ADP. It carries out the reaction ATP + H2O = ADP + phosphate + H(+). Broad-specificity nucleoside monophosphate (NMP) kinase that catalyzes the reversible transfer of the terminal phosphate group between nucleoside triphosphates and monophosphates. Also has ATPase activity. Involved in the late maturation steps of the 30S ribosomal particles, specifically 16S rRNA maturation. While NMP activity is not required for ribosome maturation, ATPase activity is. Associates transiently with small ribosomal subunit protein uS11. ATP hydrolysis breaks the interaction with uS11. May temporarily remove uS11 from the ribosome to enable a conformational change of the ribosomal RNA that is needed for the final maturation step of the small ribosomal subunit. In Thermococcus kodakarensis (strain ATCC BAA-918 / JCM 12380 / KOD1) (Pyrococcus kodakaraensis (strain KOD1)), this protein is Putative adenylate kinase.